Here is a 423-residue protein sequence, read N- to C-terminus: Putative competence-damage inducible protein (423 aa).

This sequence belongs to the CinA family.

The protein is Putative competence-damage inducible protein of Streptococcus uberis (strain ATCC BAA-854 / 0140J).